A 496-amino-acid chain; its full sequence is Glutamyl-tRNA(Gln) amidotransferase subunit A (496 aa).

Residues Lys-75 and Ser-150 each act as charge relay system in the active site. Ser-174 serves as the catalytic Acyl-ester intermediate.

The protein belongs to the amidase family. GatA subfamily. Heterotrimer of A, B and C subunits.

It carries out the reaction L-glutamyl-tRNA(Gln) + L-glutamine + ATP + H2O = L-glutaminyl-tRNA(Gln) + L-glutamate + ADP + phosphate + H(+). Functionally, allows the formation of correctly charged Gln-tRNA(Gln) through the transamidation of misacylated Glu-tRNA(Gln) in organisms which lack glutaminyl-tRNA synthetase. The reaction takes place in the presence of glutamine and ATP through an activated gamma-phospho-Glu-tRNA(Gln). This chain is Glutamyl-tRNA(Gln) amidotransferase subunit A, found in Burkholderia mallei (strain NCTC 10247).